The chain runs to 253 residues: uncharacterized protein (253 aa).

This is an uncharacterized protein from Ostreid herpesvirus 1 (isolate France) (OsHV-1).